Consider the following 148-residue polypeptide: Probable glucosamine 6-phosphate N-acetyltransferase (148 aa).

Residues 3–148 (ISINELNFDD…KQMALYLNGK (146 aa)) enclose the N-acetyltransferase domain. Substrate contacts are provided by residues T25, 72–75 (KFIH), and 84–86 (EDV). Residues 86 to 88 (VVV) and 94 to 99 (LHGIGK) each bind acetyl-CoA. Residues 115 to 116 (YK) and D120 contribute to the substrate site. Residue 129-131 (YCK) coordinates acetyl-CoA. E138 serves as a coordination point for substrate.

It belongs to the acetyltransferase family. GNA1 subfamily.

The catalysed reaction is D-glucosamine 6-phosphate + acetyl-CoA = N-acetyl-D-glucosamine 6-phosphate + CoA + H(+). It functions in the pathway nucleotide-sugar biosynthesis; UDP-N-acetyl-alpha-D-glucosamine biosynthesis; N-acetyl-alpha-D-glucosamine 1-phosphate from alpha-D-glucosamine 6-phosphate (route I): step 1/2. The sequence is that of Probable glucosamine 6-phosphate N-acetyltransferase from Acanthamoeba polyphaga (Amoeba).